The chain runs to 276 residues: MKGQILREMHVLKAIEPEFEIQRRIAFIKATLSEAHSKTLVLGISGGVDSSLAGRLCQLAVNSLNQEKASDEYQFIAVRLPYHVQQDEAEAQLACQFIQPSKQVTVNVHDGVVGIHNATLKGLTAAGLSSTDAGKTDFLKGNVKARMRMIVQYDIAGAMGGLVVGTDHSAENITGFYTKWGDGACDLAPLFGLNKRQVRLLAAHLGAPEILVKKAPTADLEDNKPQLEDEVALGLTYDQIDDFLEGKDVAKSVEDKLVSIYKRTQHKRKPIPTIYD.

ATP is bound at residue 43–50; sequence GISGGVDS. Residue D49 participates in Mg(2+) binding. R146 lines the deamido-NAD(+) pocket. Residue T166 coordinates ATP. Mg(2+) is bound at residue E171. Positions 179 and 186 each coordinate deamido-NAD(+). ATP is bound by residues K195 and T217. 266–267 provides a ligand contact to deamido-NAD(+); the sequence is HK.

This sequence belongs to the NAD synthetase family. In terms of assembly, homodimer.

It catalyses the reaction deamido-NAD(+) + NH4(+) + ATP = AMP + diphosphate + NAD(+) + H(+). The protein operates within cofactor biosynthesis; NAD(+) biosynthesis; NAD(+) from deamido-NAD(+) (ammonia route): step 1/1. Its function is as follows. Catalyzes the ATP-dependent amidation of deamido-NAD to form NAD. Uses ammonia as a nitrogen source. In Shewanella frigidimarina (strain NCIMB 400), this protein is NH(3)-dependent NAD(+) synthetase.